A 429-amino-acid polypeptide reads, in one-letter code: Ribosomal RNA small subunit methyltransferase B (429 aa).

Residues 254 to 260, Asp-277, Asp-303, and Asp-322 each bind S-adenosyl-L-methionine; that span reads CAAPGGK. The active-site Nucleophile is the Cys-375.

The protein belongs to the class I-like SAM-binding methyltransferase superfamily. RsmB/NOP family.

Its subcellular location is the cytoplasm. It catalyses the reaction cytidine(967) in 16S rRNA + S-adenosyl-L-methionine = 5-methylcytidine(967) in 16S rRNA + S-adenosyl-L-homocysteine + H(+). Specifically methylates the cytosine at position 967 (m5C967) of 16S rRNA. The chain is Ribosomal RNA small subunit methyltransferase B from Escherichia fergusonii (strain ATCC 35469 / DSM 13698 / CCUG 18766 / IAM 14443 / JCM 21226 / LMG 7866 / NBRC 102419 / NCTC 12128 / CDC 0568-73).